Reading from the N-terminus, the 283-residue chain is Elongation factor Ts (283 aa).

The segment at 80-83 (TDFV) is involved in Mg(2+) ion dislocation from EF-Tu.

Belongs to the EF-Ts family.

The protein localises to the cytoplasm. In terms of biological role, associates with the EF-Tu.GDP complex and induces the exchange of GDP to GTP. It remains bound to the aminoacyl-tRNA.EF-Tu.GTP complex up to the GTP hydrolysis stage on the ribosome. The chain is Elongation factor Ts from Salmonella agona (strain SL483).